Here is a 286-residue protein sequence, read N- to C-terminus: Pantothenate synthetase (286 aa).

30–37 (MGNLHDGH) lines the ATP pocket. The Proton donor role is filled by histidine 37. Glutamine 61 contacts (R)-pantoate. Beta-alanine is bound at residue glutamine 61. ATP is bound at residue 149–152 (GEKD). Glutamine 155 lines the (R)-pantoate pocket. Residues valine 178 and 186-189 (LSSR) each bind ATP.

It belongs to the pantothenate synthetase family. As to quaternary structure, homodimer.

The protein resides in the cytoplasm. The catalysed reaction is (R)-pantoate + beta-alanine + ATP = (R)-pantothenate + AMP + diphosphate + H(+). Its pathway is cofactor biosynthesis; (R)-pantothenate biosynthesis; (R)-pantothenate from (R)-pantoate and beta-alanine: step 1/1. Functionally, catalyzes the condensation of pantoate with beta-alanine in an ATP-dependent reaction via a pantoyl-adenylate intermediate. The chain is Pantothenate synthetase from Edwardsiella ictaluri (strain 93-146).